The following is a 168-amino-acid chain: Chorismate pyruvate-lyase (168 aa).

Residues methionine 36, arginine 78, leucine 116, and glutamate 157 each coordinate substrate.

This sequence belongs to the UbiC family. In terms of assembly, monomer.

The protein localises to the cytoplasm. The catalysed reaction is chorismate = 4-hydroxybenzoate + pyruvate. It participates in cofactor biosynthesis; ubiquinone biosynthesis. Its function is as follows. Removes the pyruvyl group from chorismate, with concomitant aromatization of the ring, to provide 4-hydroxybenzoate (4HB) for the ubiquinone pathway. The polypeptide is Chorismate pyruvate-lyase (Yersinia enterocolitica serotype O:8 / biotype 1B (strain NCTC 13174 / 8081)).